A 336-amino-acid polypeptide reads, in one-letter code: Tetraacyldisaccharide 4'-kinase (336 aa).

An ATP-binding site is contributed by 60–67 (TAGGNGKT).

It belongs to the LpxK family.

It catalyses the reaction a lipid A disaccharide + ATP = a lipid IVA + ADP + H(+). It participates in glycolipid biosynthesis; lipid IV(A) biosynthesis; lipid IV(A) from (3R)-3-hydroxytetradecanoyl-[acyl-carrier-protein] and UDP-N-acetyl-alpha-D-glucosamine: step 6/6. Transfers the gamma-phosphate of ATP to the 4'-position of a tetraacyldisaccharide 1-phosphate intermediate (termed DS-1-P) to form tetraacyldisaccharide 1,4'-bis-phosphate (lipid IVA). This is Tetraacyldisaccharide 4'-kinase from Vibrio cholerae serotype O1 (strain ATCC 39315 / El Tor Inaba N16961).